Here is a 341-residue protein sequence, read N- to C-terminus: MPSWIPLPAFCCLLLPWAFTVFHKTLGNPAPHPGPHYLLPPIHEVIHSRRGATATLPCVLGTSPPSYKVRWSKVEPGELRETLILITNGLHARDYGLLGGRASLRRGHRLDASLIIKNVRLEDEGRYRCELINGIEDESVALTLRLEGVVFPYQPSRGRYQFNYFEAKRACEEQDGRLATYSQLYQAWTEGLDWCNAGWLLEGSVRYPVLNARAPCGGHGRPGIRSYGPRDRSRDRYDAFCFTSALAGQVFFVPGRLTLSEAHAVCRRRGAVVAKVGHLYAAWKFSGLDRCDGGWLADGSVRFPITTPRPRCGGLPDPGVRSFGFPRPQQAAYGTYCYAEK.

A signal peptide spans 1–27 (MPSWIPLPAFCCLLLPWAFTVFHKTLG). The Ig-like V-type domain maps to 35–143 (PHYLLPPIHE…GIEDESVALT (109 aa)). Intrachain disulfides connect C58–C129, C171–C241, C195–C216, C266–C337, and C291–C312. 2 consecutive Link domains span residues 149-243 (VVFP…FCFT) and 246-339 (LAGQ…YCYA).

The protein belongs to the HAPLN family. Brain.

The protein localises to the secreted. It is found in the extracellular space. The protein resides in the extracellular matrix. Its function is as follows. Mediates a firm binding of versican V2 to hyaluronic acid. May play a pivotal role in the formation of the hyaluronan-associated matrix in the central nervous system (CNS) which facilitates neuronal conduction and general structural stabilization. Binds to hyaluronic acid. This chain is Hyaluronan and proteoglycan link protein 2 (Hapln2), found in Rattus norvegicus (Rat).